Here is a 1305-residue protein sequence, read N- to C-terminus: Contactin-associated protein like 5-3 (1305 aa).

An N-terminal signal peptide occupies residues Met1–Thr24. Residues Ala25 to Cys174 enclose the F5/8 type C domain. Residues Ala25–Asp1235 are Extracellular-facing. Laminin G-like domains lie at Val180–Cys360 and Pro367–Cys544. N-linked (GlcNAc...) asparagine glycosylation is present at Asn282. Cysteines 329 and 360 form a disulfide. Asn496 is a glycosylation site (N-linked (GlcNAc...) asparagine). Disulfide bonds link Cys512-Cys544, Cys550-Cys561, and Cys555-Cys570. Residues Ile546 to His583 form the EGF-like 1 domain. Asn571 is a glycosylation site (N-linked (GlcNAc...) asparagine). Cys572 and Cys582 are joined by a disulfide. The region spanning Asp584–Trp790 is the Fibrinogen C-terminal domain. The 166-residue stretch at Asn791–Cys956 folds into the Laminin G-like 3 domain. Disulfide bonds link Cys929–Cys956, Cys960–Cys973, Cys967–Cys982, and Cys984–Cys994. The 39-residue stretch at Pro957–Gln995 folds into the EGF-like 2 domain. The Laminin G-like 4 domain maps to Gln1013–Cys1198. 2 N-linked (GlcNAc...) asparagine glycosylation sites follow: Asn1023 and Asn1057. Cys1163 and Cys1198 form a disulfide bridge. The helical transmembrane segment at Leu1236–Ile1256 threads the bilayer. The Cytoplasmic portion of the chain corresponds to Met1257–Ile1305.

Belongs to the neurexin family. As to expression, expressed in brain.

The protein localises to the membrane. Its function is as follows. May play a role in the correct development and proper functioning of the peripheral and central nervous system and be involved in cell adhesion and intercellular communication. The protein is Contactin-associated protein like 5-3 (Cntnap5c) of Mus musculus (Mouse).